Here is a 380-residue protein sequence, read N- to C-terminus: Probable acyl-CoA dehydrogenase YngJ (380 aa).

FAD contacts are provided by residues 123 to 132 (FGLTEPNAGS), 156 to 158 (WIT), Arg-269, and 337 to 341 (QIHGG). Glu-364 acts as the Proton acceptor in catalysis. Position 366–368 (366–368 (TSE)) interacts with FAD.

Belongs to the acyl-CoA dehydrogenase family. FAD serves as cofactor.

It catalyses the reaction a 2,3-saturated acyl-CoA + A = a 2,3-dehydroacyl-CoA + AH2. The sequence is that of Probable acyl-CoA dehydrogenase YngJ (yngJ) from Bacillus subtilis (strain 168).